A 489-amino-acid chain; its full sequence is FK506-binding protein 4 (489 aa).

Disordered regions lie at residues 40 to 157 (PDET…GLEL) and 199 to 378 (GNYV…TTGT). Positions 66 to 88 (MDIDESDDDYEEDSEEDSDDEEI) are enriched in acidic residues. The segment covering 93–109 (SDKEKARKLKEAAALKE) has biased composition (basic and acidic residues). Acidic residues-rich tracts occupy residues 110-125 (LEDEDEDDDSEGDDEN), 143-157 (TDDDEDDESDEGLEL), and 208-250 (GPSE…DELD). Basic and acidic residues-rich tracts occupy residues 267–282 (APKLVESKGKNKRTAD), 292–303 (MMAKDGKAKGAD), and 328–353 (EQKKEAKVAKEGKEGKEGKEAKEAKK). Residues 362–378 (QGPTPSGQKPGETTTGT) show a composition bias toward polar residues. The region spanning 406-489 (VAMRYIGKLE…IFDVKLLEIK (84 aa)) is the PPIase FKBP-type domain.

The protein belongs to the FKBP-type PPIase family. FKBP3/4 subfamily. In terms of assembly, binds to histones H3 and H4.

It is found in the nucleus. The catalysed reaction is [protein]-peptidylproline (omega=180) = [protein]-peptidylproline (omega=0). Its activity is regulated as follows. Inhibited by both FK506 and rapamycin. Functionally, PPIase that acts as a histone chaperone. Histone proline isomerase that increases the rate of cis-trans isomerization at prolines on the histone H3 N-terminal tail. Proline isomerization influences H3 methylation thereby regulating gene expression. The chain is FK506-binding protein 4 (fpr4) from Aspergillus fumigatus (strain ATCC MYA-4609 / CBS 101355 / FGSC A1100 / Af293) (Neosartorya fumigata).